We begin with the raw amino-acid sequence, 519 residues long: 2-isopropylmalate synthase (519 aa).

The region spanning 12 to 274 (IRIFDTTLRD…DTSIHTSRIV (263 aa)) is the Pyruvate carboxyltransferase domain. Residues D21, H209, H211, and N245 each coordinate Mn(2+). Positions 396-519 (RLASMTISDV…MQNKQNTALA (124 aa)) are regulatory domain.

It belongs to the alpha-IPM synthase/homocitrate synthase family. LeuA type 1 subfamily. In terms of assembly, homodimer. Requires Mn(2+) as cofactor.

It is found in the cytoplasm. The enzyme catalyses 3-methyl-2-oxobutanoate + acetyl-CoA + H2O = (2S)-2-isopropylmalate + CoA + H(+). Its pathway is amino-acid biosynthesis; L-leucine biosynthesis; L-leucine from 3-methyl-2-oxobutanoate: step 1/4. Its function is as follows. Catalyzes the condensation of the acetyl group of acetyl-CoA with 3-methyl-2-oxobutanoate (2-ketoisovalerate) to form 3-carboxy-3-hydroxy-4-methylpentanoate (2-isopropylmalate). This is 2-isopropylmalate synthase from Xylella fastidiosa (strain M23).